A 302-amino-acid polypeptide reads, in one-letter code: Beta-lactamase (302 aa).

Residues Met-1–Ala-11 show a composition bias toward basic residues. Positions Met-1–Ala-29 are cleaved as a signal peptide. Residues Met-1–Pro-43 are disordered. A compositionally biased stretch (low complexity) spans Ser-26 to Pro-36. The active-site Acyl-ester intermediate is the Ser-85. Residue Ser-143 coordinates substrate. The Proton acceptor role is filled by Glu-179. Residue Lys-247–Gly-249 coordinates substrate.

The protein belongs to the class-A beta-lactamase family.

It localises to the secreted. The catalysed reaction is a beta-lactam + H2O = a substituted beta-amino acid. In terms of biological role, active on penicillins but not on cephalosporins. The protein is Beta-lactamase (bla) of Amycolatopsis lactamdurans (Nocardia lactamdurans).